Consider the following 542-residue polypeptide: Peptide chain release factor 3 (542 aa).

The region spanning 14 to 283 (DKRRNFAIIS…AFLEYALKPG (270 aa)) is the tr-type G domain. GTP is bound by residues 23-30 (SHPDAGKT), 91-95 (DTPGH), and 145-148 (NKMD).

Belongs to the TRAFAC class translation factor GTPase superfamily. Classic translation factor GTPase family. PrfC subfamily.

The protein localises to the cytoplasm. Its function is as follows. Increases the formation of ribosomal termination complexes and stimulates activities of RF-1 and RF-2. It binds guanine nucleotides and has strong preference for UGA stop codons. It may interact directly with the ribosome. The stimulation of RF-1 and RF-2 is significantly reduced by GTP and GDP, but not by GMP. The polypeptide is Peptide chain release factor 3 (Trichodesmium erythraeum (strain IMS101)).